Reading from the N-terminus, the 154-residue chain is Protein X (154 aa).

The mitochondrial targeting sequence stretch occupies residues 68-117 (PCALRFTSARSMETTVNAHQVLPKVLHKRTLGLSAMSTTDLEAYFKDCLF).

This sequence belongs to the orthohepadnavirus protein X family. May form homodimer. May interact with host CEBPA, CFLAR, CREB1, DDB1, E4F1, HBXIP, HSPD1/HSP60, NFKBIA, POLR2E and SMAD4. Interacts with host SMC5-SMC6 complex and induces its degradation. Interacts with host TRPC4AP; leading to prevent ubiquitination of TRPC4AP. Interacts with host PLSCR1; this interaction promotes ubiquitination and degradation of HBx and impairs HBx-mediated cell proliferation. In terms of processing, a fraction may be phosphorylated in insect cells and HepG2 cells, a human hepatoblastoma cell line. Phosphorylated in vitro by host protein kinase C or mitogen-activated protein kinase. N-acetylated in insect cells.

The protein localises to the host cytoplasm. Its subcellular location is the host nucleus. It is found in the host mitochondrion. In terms of biological role, multifunctional protein that plays a role in silencing host antiviral defenses and promoting viral transcription. Does not seem to be essential for HBV infection. May be directly involved in development of cirrhosis and liver cancer (hepatocellular carcinoma). Most of cytosolic activities involve modulation of cytosolic calcium. The effect on apoptosis is controversial depending on the cell types in which the studies have been conducted. May induce apoptosis by localizing in mitochondria and causing loss of mitochondrial membrane potential. May also modulate apoptosis by binding host CFLAR, a key regulator of the death-inducing signaling complex (DISC). Promotes viral transcription by using the host E3 ubiquitin ligase DDB1 to target the SMC5-SMC6 complex to proteasomal degradation. This host complex would otherwise bind to viral episomal DNA, and prevents its transcription. Moderately stimulates transcription of many different viral and cellular transcription elements. Promoters and enhancers stimulated by HBx contain DNA binding sites for NF-kappa-B, AP-1, AP-2, c-EBP, ATF/CREB, or the calcium-activated factor NF-AT. The chain is Protein X from Homo sapiens (Human).